The primary structure comprises 265 residues: Membrane steroid-binding protein 2 (265 aa).

A helical membrane pass occupies residues 63–85; that stretch reads WAAARSASPVAVIAAVAGAAVVY. The disordered stretch occupies residues 94-116; the sequence is PPPPPARPREEPSEEAPPPPEPV. Residues 118 to 217 enclose the Cytochrome b5 heme-binding domain; that stretch reads VGEITAEELL…SKYVKVGTIK (100 aa). The interval 120-217 is steroid-binding; the sequence is EITAEELLQY…SKYVKVGTIK (98 aa).

This sequence belongs to the cytochrome b5 family. MAPR subfamily.

Its subcellular location is the cell membrane. In terms of biological role, binds multiple steroid compounds. This Oryza sativa subsp. japonica (Rice) protein is Membrane steroid-binding protein 2.